Here is a 241-residue protein sequence, read N- to C-terminus: ATP synthase subunit a (241 aa).

5 helical membrane-spanning segments follow: residues 30–50 (GQVFLTSWILLGALLVFISFG), 91–111 (FIGTLFLFVFVSNWGGALIPW), 128–148 (INTTIALALLVSLSYFYAGLS), 193–213 (LVVGVLVFLVPLILPIPVMFL), and 214–234 (GLFTSAIQALIFATLAAYYIG).

Belongs to the ATPase A chain family. In terms of assembly, F-type ATPases have 2 components, CF(1) - the catalytic core - and CF(0) - the membrane proton channel. CF(1) has five subunits: alpha(3), beta(3), gamma(1), delta(1), epsilon(1). CF(0) has four main subunits: a, b, b' and c.

Its subcellular location is the cellular thylakoid membrane. Functionally, key component of the proton channel; it plays a direct role in the translocation of protons across the membrane. This Prochlorococcus marinus (strain AS9601) protein is ATP synthase subunit a.